The following is a 532-amino-acid chain: Cilia- and flagella-associated protein 97 (532 aa).

Ser-19 bears the Phosphoserine mark. Disordered stretches follow at residues 28–83 (ETNS…PVEN), 116–263 (IPNR…TPDI), 306–333 (KAAK…SLDH), 398–421 (LSRQ…PPKL), and 485–532 (GQYS…TAWL). Residues 35–49 (KQNDDPKERIDKDTK) show a composition bias toward basic and acidic residues. Over residues 50–63 (NVNSNTGMQTTENY) the composition is skewed to polar residues. The span at 67-82 (KGNERNVKFPPEHPVE) shows a compositional bias: basic and acidic residues. Positions 127–139 (GEDDYYTDGEESS) are enriched in acidic residues. Residue Thr-133 is modified to Phosphothreonine. Phosphoserine occurs at positions 138 and 139. 2 stretches are compositionally biased toward low complexity: residues 170–185 (SSSS…SGSG) and 194–205 (DSHLSDSSPSSK). At Ser-218 the chain carries Phosphoserine. Positions 227–239 (IKSTETQPSSTTP) are enriched in polar residues. Ser-248 is modified (phosphoserine). Over residues 253 to 263 (TDVSPLSTPDI) the composition is skewed to polar residues. The span at 320-329 (SSKSSSVLDS) shows a compositional bias: low complexity. At Ser-330 the chain carries Phosphoserine. The stretch at 374 to 450 (GKNYSFTREE…ALLKRLEAVK (77 aa)) forms a coiled coil. Residues 493-503 (SRTSSATSGLS) are compositionally biased toward polar residues.

Belongs to the CFAP97 family.

The protein is Cilia- and flagella-associated protein 97 of Homo sapiens (Human).